A 284-amino-acid chain; its full sequence is Acetylglutamate kinase (284 aa).

Substrate-binding positions include 66 to 67, Arg-88, and Asn-179; that span reads GG.

The protein belongs to the acetylglutamate kinase family. ArgB subfamily.

The protein localises to the cytoplasm. The enzyme catalyses N-acetyl-L-glutamate + ATP = N-acetyl-L-glutamyl 5-phosphate + ADP. It functions in the pathway amino-acid biosynthesis; L-arginine biosynthesis; N(2)-acetyl-L-ornithine from L-glutamate: step 2/4. Functionally, catalyzes the ATP-dependent phosphorylation of N-acetyl-L-glutamate. This Actinobacillus pleuropneumoniae serotype 7 (strain AP76) protein is Acetylglutamate kinase.